The primary structure comprises 92 residues: Small ribosomal subunit protein uS19 (92 aa).

This sequence belongs to the universal ribosomal protein uS19 family.

Functionally, protein S19 forms a complex with S13 that binds strongly to the 16S ribosomal RNA. This is Small ribosomal subunit protein uS19 from Caulobacter sp. (strain K31).